Reading from the N-terminus, the 807-residue chain is Oxysterol-binding protein 1 (807 aa).

Alanine 2 is modified (N-acetylalanine). The interval 61 to 86 (GAGGVAAAGPAPAPPTGGSGGSGAGG) is disordered. A compositionally biased stretch (gly residues) spans 77 to 86 (GGSGGSGAGG). The PH domain maps to 88-181 (GSAREGWLFK…WVTALELAKA (94 aa)). 117 to 122 (LSYYRS) provides a ligand contact to a 1,2-diacyl-sn-glycero-3-phospho-(1D-myo-inositol 4-phosphate). Phosphoserine occurs at positions 190, 193, 198, 238, and 240. Residues 291-326 (QKSLQYERDQRIRLEETLEQLAKQHNHLERAFRGAT) adopt a coiled-coil conformation. Glutamine 314 contributes to the 20-hydroxycholesterol binding site. Glutamine 314 serves as a coordination point for 25-hydroxycholesterol. Position 314 (glutamine 314) interacts with 7beta-hydroxycholesterol. Glutamine 314 contributes to the cholesterol binding site. Residue glutamine 314 coordinates ergosterol. The segment at 329–353 (PANTPGNVGSGKDQCCSGKGDMSDE) is disordered. Serine 338, serine 345, and serine 351 each carry phosphoserine. Residues 358–364 (EFFDAPE) carry the FFAT motif. A Phosphothreonine modification is found at threonine 377. Phosphoserine occurs at positions 379, 382, 385, 386, and 389. Residues 493-496 (KPFN) and 522-523 (HH) each bind a 1,2-diacyl-sn-glycero-3-phospho-(1D-myo-inositol 4-phosphate). Residues 710–759 (TAPTDSRLRPDQRLMENGRWDEANAEKQRLEEKQRLSRKKREAEAMKATE) are disordered. Over residues 715–759 (SRLRPDQRLMENGRWDEANAEKQRLEEKQRLSRKKREAEAMKATE) the composition is skewed to basic and acidic residues. Residues 730 to 760 (DEANAEKQRLEEKQRLSRKKREAEAMKATED) are a coiled coil.

The protein belongs to the OSBP family. In terms of assembly, homodimer or homotrimer. Interacts (via FFAT motif) with VAPA. Interacts (via C-terminus) with RELCH (via the third HEAT repeat). Found in a complex composed of RELCH, OSBP1 and RAB11A. In terms of tissue distribution, widely expressed.

It is found in the cytoplasm. Its subcellular location is the cytosol. The protein resides in the perinuclear region. The protein localises to the golgi apparatus membrane. It localises to the endoplasmic reticulum membrane. It is found in the golgi apparatus. Its subcellular location is the trans-Golgi network. Lipid transporter involved in lipid countertransport between the Golgi complex and membranes of the endoplasmic reticulum: specifically exchanges sterol with phosphatidylinositol 4-phosphate (PI4P), delivering sterol to the Golgi in exchange for PI4P, which is degraded by the SAC1/SACM1L phosphatase in the endoplasmic reticulum. Binds cholesterol and a range of oxysterols including 25-hydroxycholesterol. Cholesterol binding promotes the formation of a complex with PP2A and a tyrosine phosphatase which dephosphorylates ERK1/2, whereas 25-hydroxycholesterol causes its disassembly. Regulates cholesterol efflux by decreasing ABCA1 stability. This chain is Oxysterol-binding protein 1, found in Homo sapiens (Human).